The following is a 427-amino-acid chain: MSVEHATPVQQPAHAAASVRPVMILAGGTGGHIFPGLAVAKVLRARGVPVTWLGADGAMETRLVPQHAIQIDTLAISGLRGKGIVKLLGAPVRVMRAVRAAGFVLRKRQPRAVISFGGFAAGPGGLAARLLGVPLLVHEQNRAPGMTNKVLSRFARRVLTGFPGSFAGEEAVGNPVREEIAALPAPATRLIGRGGPVRLLVLGGSQGARALNNAVPAALAALGHPAVDVRHQCGEKLRAEAEAAYAQAAVNASVEPFIADMAAAYAWADLVVCRAGASTLAEVCAAGVGSVLVPFAAAVDDHQTRNAEYLVSAEAAVLLKQDGTLAVRLQQVLQTLLADPARRLAMAQAARTLAKPDAAERIADIILQEAGNGKSGMGNGQSTEQLQEHTVIHQNKRTDQALDAASASLHPIPDSRFPIRTSAGGAQ.

UDP-N-acetyl-alpha-D-glucosamine-binding positions include 29 to 31 (TGG), Asn-141, Arg-177, Ser-205, Ile-258, and Gln-303. Residues 408 to 427 (SLHPIPDSRFPIRTSAGGAQ) are disordered.

The protein belongs to the glycosyltransferase 28 family. MurG subfamily.

The protein resides in the cell inner membrane. It catalyses the reaction di-trans,octa-cis-undecaprenyl diphospho-N-acetyl-alpha-D-muramoyl-L-alanyl-D-glutamyl-meso-2,6-diaminopimeloyl-D-alanyl-D-alanine + UDP-N-acetyl-alpha-D-glucosamine = di-trans,octa-cis-undecaprenyl diphospho-[N-acetyl-alpha-D-glucosaminyl-(1-&gt;4)]-N-acetyl-alpha-D-muramoyl-L-alanyl-D-glutamyl-meso-2,6-diaminopimeloyl-D-alanyl-D-alanine + UDP + H(+). It participates in cell wall biogenesis; peptidoglycan biosynthesis. In terms of biological role, cell wall formation. Catalyzes the transfer of a GlcNAc subunit on undecaprenyl-pyrophosphoryl-MurNAc-pentapeptide (lipid intermediate I) to form undecaprenyl-pyrophosphoryl-MurNAc-(pentapeptide)GlcNAc (lipid intermediate II). The protein is UDP-N-acetylglucosamine--N-acetylmuramyl-(pentapeptide) pyrophosphoryl-undecaprenol N-acetylglucosamine transferase of Xanthomonas campestris pv. campestris (strain B100).